The chain runs to 318 residues: GTP 3',8-cyclase (318 aa).

The Radical SAM core domain maps to 4–218; it reads KHGRNIDYLR…MSRSDLIPIE (215 aa). Arg-13 lines the GTP pocket. The [4Fe-4S] cluster site is built by Cys-20 and Cys-24. Tyr-26 serves as a coordination point for S-adenosyl-L-methionine. Cys-27 lines the [4Fe-4S] cluster pocket. Arg-62 serves as a coordination point for GTP. Gly-66 is an S-adenosyl-L-methionine binding site. Thr-93 is a GTP binding site. Ser-117 contacts S-adenosyl-L-methionine. Lys-154 contacts GTP. Position 188 (Met-188) interacts with S-adenosyl-L-methionine. 2 residues coordinate [4Fe-4S] cluster: Cys-248 and Cys-251. 253–255 contributes to the GTP binding site; the sequence is KIR. Cys-265 contacts [4Fe-4S] cluster.

It belongs to the radical SAM superfamily. MoaA family. In terms of assembly, monomer and homodimer. [4Fe-4S] cluster is required as a cofactor.

It carries out the reaction GTP + AH2 + S-adenosyl-L-methionine = (8S)-3',8-cyclo-7,8-dihydroguanosine 5'-triphosphate + 5'-deoxyadenosine + L-methionine + A + H(+). The protein operates within cofactor biosynthesis; molybdopterin biosynthesis. Catalyzes the cyclization of GTP to (8S)-3',8-cyclo-7,8-dihydroguanosine 5'-triphosphate. In Clostridium acetobutylicum (strain ATCC 824 / DSM 792 / JCM 1419 / IAM 19013 / LMG 5710 / NBRC 13948 / NRRL B-527 / VKM B-1787 / 2291 / W), this protein is GTP 3',8-cyclase.